The sequence spans 191 residues: dCTP deaminase (191 aa).

DCTP contacts are provided by residues 112-117, 136-138, Q157, Y173, and Q183; these read KSTYAR and TLE. E138 (proton donor/acceptor) is an active-site residue.

This sequence belongs to the dCTP deaminase family. In terms of assembly, homotrimer.

The enzyme catalyses dCTP + H2O + H(+) = dUTP + NH4(+). Its pathway is pyrimidine metabolism; dUMP biosynthesis; dUMP from dCTP (dUTP route): step 1/2. Catalyzes the deamination of dCTP to dUTP. The polypeptide is dCTP deaminase (Psychrobacter cryohalolentis (strain ATCC BAA-1226 / DSM 17306 / VKM B-2378 / K5)).